A 61-amino-acid polypeptide reads, in one-letter code: MESRLLDTLVCPVCKGRLDFDRARAELLCRADRLAYPVRDGIPVMLESEARQLDAAPADTA.

This sequence belongs to the UPF0434 family.

The sequence is that of UPF0434 protein Bpet2671 from Bordetella petrii (strain ATCC BAA-461 / DSM 12804 / CCUG 43448).